The following is a 255-amino-acid chain: Indole-3-glycerol phosphate synthase (255 aa).

It belongs to the TrpC family.

The enzyme catalyses 1-(2-carboxyphenylamino)-1-deoxy-D-ribulose 5-phosphate + H(+) = (1S,2R)-1-C-(indol-3-yl)glycerol 3-phosphate + CO2 + H2O. The protein operates within amino-acid biosynthesis; L-tryptophan biosynthesis; L-tryptophan from chorismate: step 4/5. The chain is Indole-3-glycerol phosphate synthase from Streptococcus sanguinis (strain SK36).